The following is a 303-amino-acid chain: Polyisoprenyl-teichoic acid--peptidoglycan teichoic acid transferase TagU (303 aa).

Residues 1-4 (MKKK) are Cytoplasmic-facing. The chain crosses the membrane as a helical; Signal-anchor for type II membrane protein span at residues 5-25 (ILFWVLGILGVLIIGGGIYAY). The Extracellular portion of the chain corresponds to 26–303 (NVYSSVSNTL…KLRSHLEVTK (278 aa)).

It belongs to the LytR/CpsA/Psr (LCP) family.

Its subcellular location is the cell membrane. It participates in cell wall biogenesis. Its function is as follows. May catalyze the final step in cell wall teichoic acid biosynthesis, the transfer of the anionic cell wall polymers (APs) from their lipid-linked precursor to the cell wall peptidoglycan (PG). The polypeptide is Polyisoprenyl-teichoic acid--peptidoglycan teichoic acid transferase TagU (Bacillus cereus (strain AH820)).